The chain runs to 431 residues: tRNA(Ile)-lysidine synthase (431 aa).

19–24 (STGIDS) contributes to the ATP binding site.

It belongs to the tRNA(Ile)-lysidine synthase family.

It is found in the cytoplasm. It carries out the reaction cytidine(34) in tRNA(Ile2) + L-lysine + ATP = lysidine(34) in tRNA(Ile2) + AMP + diphosphate + H(+). In terms of biological role, ligates lysine onto the cytidine present at position 34 of the AUA codon-specific tRNA(Ile) that contains the anticodon CAU, in an ATP-dependent manner. Cytidine is converted to lysidine, thus changing the amino acid specificity of the tRNA from methionine to isoleucine. In Staphylococcus aureus (strain Mu50 / ATCC 700699), this protein is tRNA(Ile)-lysidine synthase.